Reading from the N-terminus, the 1114-residue chain is Kinesin-like protein KIN-12F (1114 aa).

Residues methionine 1–arginine 84 are disordered. Polar residues-rich tracts occupy residues leucine 10–aspartate 39 and proline 48–alanine 80. The Kinesin motor domain maps to histidine 104–methionine 436. Position 175-182 (glycine 175–threonine 182) interacts with ATP. Coiled-coil stretches lie at residues glutamine 761 to aspartate 791, alanine 872 to alanine 942, and glutamate 1038 to glutamate 1081. Positions asparagine 1092 to methionine 1114 are disordered.

Belongs to the TRAFAC class myosin-kinesin ATPase superfamily. Kinesin family. KIN-12 subfamily.

This is Kinesin-like protein KIN-12F from Arabidopsis thaliana (Mouse-ear cress).